Reading from the N-terminus, the 147-residue chain is Large ribosomal subunit protein uL15 (147 aa).

Residues 1–20 show a composition bias toward basic and acidic residues; the sequence is MTMHLNDLKPADGARTERTR. The disordered stretch occupies residues 1-64; that stretch reads MTMHLNDLKP…GGQTPMQRRL (64 aa). Gly residues predominate over residues 23–33; sequence RGIGSGLGKTC. Over residues 34–47 the composition is skewed to basic residues; sequence GRGHKGSFARKGGG.

Belongs to the universal ribosomal protein uL15 family. Part of the 50S ribosomal subunit.

Binds to the 23S rRNA. This chain is Large ribosomal subunit protein uL15, found in Xanthomonas campestris pv. campestris (strain 8004).